The primary structure comprises 429 residues: Histidine--tRNA ligase (429 aa).

It belongs to the class-II aminoacyl-tRNA synthetase family. Homodimer.

The protein resides in the cytoplasm. The catalysed reaction is tRNA(His) + L-histidine + ATP = L-histidyl-tRNA(His) + AMP + diphosphate + H(+). The polypeptide is Histidine--tRNA ligase (Pelodictyon phaeoclathratiforme (strain DSM 5477 / BU-1)).